A 526-amino-acid chain; its full sequence is Outer capsid protein VP5 (526 aa).

Residues 1–42 (MGKVIRSLSRFGKKVGNALTSNTAKKIYSTIGKAAERFAESE) form an involved in membrane permeabilization region.

Belongs to the orbivirus VP5 family.

Its subcellular location is the virion. VP5 protein is one of the two proteins (with VP2) which constitute the virus particle outer capsid. Acts as a membrane permeabilization protein that mediates release of viral particles from endosomal compartments into the cytoplasm. Permeabilization activity is probably negatively regulated by VP2 and is triggered by endosomal degradation of VP2 and exposure to low pH. This Bluetongue virus 1 (isolate Australia) (BTV 1) protein is Outer capsid protein VP5 (Segment-6).